We begin with the raw amino-acid sequence, 531 residues long: Peptide chain release factor 3 (531 aa).

The tr-type G domain occupies 13–282 (SKRRTFAIIS…GLTQWAPSPM (270 aa)). GTP is bound by residues 22 to 29 (SHPDAGKT), 90 to 94 (DTPGH), and 144 to 147 (NKLD).

This sequence belongs to the TRAFAC class translation factor GTPase superfamily. Classic translation factor GTPase family. PrfC subfamily.

Its subcellular location is the cytoplasm. Its function is as follows. Increases the formation of ribosomal termination complexes and stimulates activities of RF-1 and RF-2. It binds guanine nucleotides and has strong preference for UGA stop codons. It may interact directly with the ribosome. The stimulation of RF-1 and RF-2 is significantly reduced by GTP and GDP, but not by GMP. The chain is Peptide chain release factor 3 from Vibrio cholerae serotype O1 (strain ATCC 39541 / Classical Ogawa 395 / O395).